Consider the following 299-residue polypeptide: Pyrroline-5-carboxylate reductase 2 (299 aa).

This sequence belongs to the pyrroline-5-carboxylate reductase family. In terms of assembly, homodecamer; composed of 5 homodimers.

It carries out the reaction L-proline + NADP(+) = (S)-1-pyrroline-5-carboxylate + NADPH + 2 H(+). The catalysed reaction is L-proline + NAD(+) = (S)-1-pyrroline-5-carboxylate + NADH + 2 H(+). It participates in amino-acid biosynthesis; L-proline biosynthesis; L-proline from L-glutamate 5-semialdehyde: step 1/1. This Dictyostelium discoideum (Social amoeba) protein is Pyrroline-5-carboxylate reductase 2 (pycr2).